Here is a 360-residue protein sequence, read N- to C-terminus: Heat-inducible transcription repressor HrcA (360 aa).

Belongs to the HrcA family.

In terms of biological role, negative regulator of class I heat shock genes (grpE-dnaK-dnaJ and groELS operons). Prevents heat-shock induction of these operons. This is Heat-inducible transcription repressor HrcA from Streptococcus thermophilus (strain CNRZ 1066).